Consider the following 314-residue polypeptide: Protein REGULATOR OF FATTY ACID COMPOSITION 3, chloroplastic (314 aa).

A chloroplast-targeting transit peptide spans 1–47; sequence MESLLHASSSLVSLRPRIDGRDSFINPSRVCLNPSLGRRGSKPLPLV. Disordered stretches follow at residues 49–73 and 214–314; these read AAKK…ATGP and AITE…NVGG. Residues 56–69 show a composition bias toward basic and acidic residues; the sequence is KKDDNHNFSARPDE. 2 stretches are compositionally biased toward acidic residues: residues 233–269 and 277–294; these read EYYD…DDDG and GDEE…EQEE. Residues 295–308 show a composition bias toward basic and acidic residues; it reads GQDKSTNGRRETRR.

Belongs to the bacterial ribosomal protein bS6 family. As to quaternary structure, interacts with CFM3B/SPRT2 in plastids. Expressed ubiquitously in roots, leaves, stems, flower buds, flowers and siliques.

The protein localises to the plastid. It is found in the chloroplast. Prevents non-specific action of the splicing factor CFM3b during plastid rRNA biogenesis to improve the accuracy of plastid rRNA processing. Required for plastid functions such as photosynthesis, intracellular distribution, plastid rRNAs biosynthesis and plastid gene expression in roots. Involved in a sucrose-conditional process important for the organization of root lateral and apical meristems (e.g. establishment of RAM from pericycle and symplasmic connectivity), and subsequent primary and lateral roots development. Modulates C18 unsaturated fatty acid metabolism. The sequence is that of Protein REGULATOR OF FATTY ACID COMPOSITION 3, chloroplastic from Arabidopsis thaliana (Mouse-ear cress).